The sequence spans 232 residues: MSLFDTIRNTLVPVHKEGYIFVGAFFVGSLVLGWIWEPLFWVGLLLTLWCAYFFRDPERLTPQDDDLVVSPADGRVSMIQMVIPPEELQLSSDPMLRISIFMNVFDVHINRAPVRGAIRQVVYREGSFLNAELDKASTDNERNSLVIDGPRGAIGVVQIAGLVARRILCWSVPGQALGVGERFGLIRFGSRLDVYLPAGAEPRVAVGQRSIGGETVIAEYGSAKGPVISRRS.

Catalysis depends on Ser-190, which acts as the Schiff-base intermediate with substrate; via pyruvic acid. Ser-190 carries the pyruvic acid (Ser); by autocatalysis modification.

This sequence belongs to the phosphatidylserine decarboxylase family. PSD-A subfamily. In terms of assembly, heterodimer of a large membrane-associated beta subunit and a small pyruvoyl-containing alpha subunit. Requires pyruvate as cofactor. Is synthesized initially as an inactive proenzyme. Formation of the active enzyme involves a self-maturation process in which the active site pyruvoyl group is generated from an internal serine residue via an autocatalytic post-translational modification. Two non-identical subunits are generated from the proenzyme in this reaction, and the pyruvate is formed at the N-terminus of the alpha chain, which is derived from the carboxyl end of the proenzyme. The post-translation cleavage follows an unusual pathway, termed non-hydrolytic serinolysis, in which the side chain hydroxyl group of the serine supplies its oxygen atom to form the C-terminus of the beta chain, while the remainder of the serine residue undergoes an oxidative deamination to produce ammonia and the pyruvoyl prosthetic group on the alpha chain.

Its subcellular location is the cell membrane. It carries out the reaction a 1,2-diacyl-sn-glycero-3-phospho-L-serine + H(+) = a 1,2-diacyl-sn-glycero-3-phosphoethanolamine + CO2. It participates in phospholipid metabolism; phosphatidylethanolamine biosynthesis; phosphatidylethanolamine from CDP-diacylglycerol: step 2/2. Catalyzes the formation of phosphatidylethanolamine (PtdEtn) from phosphatidylserine (PtdSer). The sequence is that of Phosphatidylserine decarboxylase proenzyme from Allorhizobium ampelinum (strain ATCC BAA-846 / DSM 112012 / S4) (Agrobacterium vitis (strain S4)).